The following is an 88-amino-acid chain: Small ribosomal subunit protein uS19 (88 aa).

It belongs to the universal ribosomal protein uS19 family.

In terms of biological role, protein S19 forms a complex with S13 that binds strongly to the 16S ribosomal RNA. The polypeptide is Small ribosomal subunit protein uS19 (Mycoplasma mycoides subsp. mycoides SC (strain CCUG 32753 / NCTC 10114 / PG1)).